The primary structure comprises 199 residues: Inner membrane-spanning protein YciB (199 aa).

5 helical membrane passes run 3-23, 47-67, 76-96, 119-139, and 149-169; these read LLID…WGIY, VEPM…ATLL, WKPS…QLVF, LNWS…VIAY, and FKLF…AIYM. The disordered stretch occupies residues 180–199; that stretch reads AAAATPDALPPPGVQQDKQP.

This sequence belongs to the YciB family.

It localises to the cell inner membrane. Functionally, plays a role in cell envelope biogenesis, maintenance of cell envelope integrity and membrane homeostasis. This Delftia acidovorans (strain DSM 14801 / SPH-1) protein is Inner membrane-spanning protein YciB.